Reading from the N-terminus, the 427-residue chain is Serine--tRNA ligase (427 aa).

231-233 (TAE) contacts L-serine. 262–264 (RSE) is an ATP binding site. Glu285 serves as a coordination point for L-serine. 349–352 (EISS) lines the ATP pocket. Ser385 lines the L-serine pocket.

Belongs to the class-II aminoacyl-tRNA synthetase family. Type-1 seryl-tRNA synthetase subfamily. As to quaternary structure, homodimer. The tRNA molecule binds across the dimer.

It is found in the cytoplasm. The catalysed reaction is tRNA(Ser) + L-serine + ATP = L-seryl-tRNA(Ser) + AMP + diphosphate + H(+). The enzyme catalyses tRNA(Sec) + L-serine + ATP = L-seryl-tRNA(Sec) + AMP + diphosphate + H(+). Its pathway is aminoacyl-tRNA biosynthesis; selenocysteinyl-tRNA(Sec) biosynthesis; L-seryl-tRNA(Sec) from L-serine and tRNA(Sec): step 1/1. Functionally, catalyzes the attachment of serine to tRNA(Ser). Is also able to aminoacylate tRNA(Sec) with serine, to form the misacylated tRNA L-seryl-tRNA(Sec), which will be further converted into selenocysteinyl-tRNA(Sec). This chain is Serine--tRNA ligase, found in Rhizobium rhizogenes (strain K84 / ATCC BAA-868) (Agrobacterium radiobacter).